Here is a 333-residue protein sequence, read N- to C-terminus: Low specificity L-threonine aldolase (333 aa).

N6-(pyridoxal phosphate)lysine is present on Lys-197.

The protein belongs to the threonine aldolase family. Homotetramer. Requires pyridoxal 5'-phosphate as cofactor.

The enzyme catalyses L-threonine = acetaldehyde + glycine. The catalysed reaction is L-allo-threonine = acetaldehyde + glycine. Its function is as follows. Catalyzes the cleavage of L-allo-threonine and L-threonine to glycine and acetaldehyde. L-threo-phenylserine and L-erythro-phenylserine are also good substrates. This is Low specificity L-threonine aldolase (ltaE) from Escherichia coli O157:H7.